Reading from the N-terminus, the 481-residue chain is Aspartyl/glutamyl-tRNA(Asn/Gln) amidotransferase subunit B (481 aa).

Belongs to the GatB/GatE family. GatB subfamily. In terms of assembly, heterotrimer of A, B and C subunits.

It carries out the reaction L-glutamyl-tRNA(Gln) + L-glutamine + ATP + H2O = L-glutaminyl-tRNA(Gln) + L-glutamate + ADP + phosphate + H(+). The catalysed reaction is L-aspartyl-tRNA(Asn) + L-glutamine + ATP + H2O = L-asparaginyl-tRNA(Asn) + L-glutamate + ADP + phosphate + 2 H(+). In terms of biological role, allows the formation of correctly charged Asn-tRNA(Asn) or Gln-tRNA(Gln) through the transamidation of misacylated Asp-tRNA(Asn) or Glu-tRNA(Gln) in organisms which lack either or both of asparaginyl-tRNA or glutaminyl-tRNA synthetases. The reaction takes place in the presence of glutamine and ATP through an activated phospho-Asp-tRNA(Asn) or phospho-Glu-tRNA(Gln). This is Aspartyl/glutamyl-tRNA(Asn/Gln) amidotransferase subunit B from Fusobacterium nucleatum subsp. nucleatum (strain ATCC 25586 / DSM 15643 / BCRC 10681 / CIP 101130 / JCM 8532 / KCTC 2640 / LMG 13131 / VPI 4355).